Consider the following 782-residue polypeptide: MRRAVSKIIPNGPPRFLQSGSLLSGDTNFKYRIDFNSVDEFYISLADPHRSWLPGDEISGQIIFISKKDLANIVITLSLIGSVKINASSHSKLRPVKELLFHHTIKIYGDENSGNNNENGEEFSNGLFKGEHRFPFIVKLPNKRVFTSIDFGKGSIKYSLKAAVGNASSFANDSPAASPLSDSNNNNNNTTKNNFISKTKNLNFHNSVYTSEKIITLINPIDVSKLPRSKPKRLIIKDPRLSKKLSRTQSSTSTLNTVNTFNTLSSNNSDTTTNGEFHSNGNTPGNSASQSNSNSPLNGLDNARPQVIKVALEIPERGFLRGELIPTKLNINHSRKIQDLNGIIVTLVRVCRLSNGHENMVESFRKDLQQSVLPLYVDPNTFQSEINTNLRVPADAFPTISGCPLVSFQYFIEVLINLSGKSLILDSSNHHKPSISTDEANHSLLENPSNDLKYKFNFNSNASMNQNERSGFINTDKYKRMKKFLLLTTEVIIGTNRSNERSAYTSNERSNELLHDNLNSISPTSRKSSSVSGSNDSPLLFNQTGSTPPSQQGHQQPMSLNPLSEAIPANNFSTPPYFENQQDSPLNIADTPIPGYEEVSNNYHANSSLAPVQMPTHQHLSEKEQIRAHEASLLPSAPPLDDAEETETISPIDKNNEILENIEESGEEVNQLNNESNDSASSRHSQSFGFFTYQNSTSTTTPTNHESLEEEEEEEEDNLYHSNNLSNSHAEIDSESTDWVPNYETANHDILLENDHVSTGTNMHPGRNANSSARGPQQDNSS.

5 disordered regions span residues Asp173 to Asn194, Leu234 to Leu300, Asn517 to Leu586, Pro635 to Lys654, and Tyr693 to Ser782. Low complexity-rich tracts occupy residues Ser181 to Asn194 and Thr248 to Asn274. Polar residues-rich tracts occupy residues Gly275–Leu297, Asn517–Pro562, and Asn570–Pro585. A compositionally biased stretch (low complexity) spans Asn695 to Asn704. Acidic residues predominate over residues Leu708–Asp717. The segment covering Tyr720 to His729 has biased composition (low complexity). The segment covering Ala746–His756 has biased composition (basic and acidic residues). A compositionally biased stretch (polar residues) spans Val757–Ser782.

Belongs to the arrestin family. PalF/RIM8 subfamily.

Functionally, required for the proteolytic cleavage of the transcription factor RIM101 in response to alkaline ambient pH. This chain is pH-response regulator protein palF/RIM8 (RIM8), found in Debaryomyces hansenii (strain ATCC 36239 / CBS 767 / BCRC 21394 / JCM 1990 / NBRC 0083 / IGC 2968) (Yeast).